The sequence spans 282 residues: uncharacterized protein (282 aa).

5 helical membrane-spanning segments follow: residues 9 to 29 (LLKI…APHG), 43 to 63 (ISGR…FLYA), 123 to 143 (VFVS…LYLV), 158 to 178 (YIGM…DNIL), and 232 to 252 (LAAG…ILLM).

The protein belongs to the steroid 5-alpha reductase family.

Its subcellular location is the endoplasmic reticulum membrane. This is an uncharacterized protein from Schizosaccharomyces pombe (strain 972 / ATCC 24843) (Fission yeast).